The following is a 481-amino-acid chain: MVLLAMGLVIYLATSKYGNIRLGEGKPEYSTLSWLFMFICAGLGSSTLYWGVAEWAYYYQTPGLNIAPRSQQALEFSVPYSFFHWGISAWATYTLASLIMAYHFHVRKNKGLSLSGIIAAITGVRPQGPWGKLVDLMFLIATVGALTISLVVTAATFTRGLSALTGLPDNFTVQAFVILLSGGIFCLSSWIGINNGLQRLSKMVGWGAFLLPLLVLIVGPTEFITNSIINAIGLTTQNFLQMSLFTDPLGDGSFTRNWTVFYWLWWISYTPGVAMFVTRVSRGRKIKEVIWGLILGSTVGCWFFFGVMESYAIHQFINGVINVPQVLETLGGETAVQQVLMSLPAGKLFLAAYLGVMIIFLASHMDAVAYTMAATSTRNLQEGDDPDRGLRLFWCVVITLIPLSILFTGASLETMKTTVVLTALPFLVILLVKVGGFIRWLKQDYADIPAHQVEHYLPQTPVEALEKTPVLPAGTVFKGDN.

10 helical membrane passes run 32–52, 82–102, 137–157, 173–193, 204–224, 258–278, 289–309, 348–368, 392–412, and 418–438; these read LSWL…YWGV, FFHW…IMAY, MFLI…AATF, VQAF…WIGI, VGWG…TEFI, WTVF…MFVT, VIWG…GVME, LFLA…MDAV, LFWC…GASL, and TVVL…GGFI.

Belongs to the BCCT transporter (TC 2.A.15) family.

The protein localises to the cell inner membrane. Functionally, probable transporter whose substrate is unknown. Is not involved in aerobic D-malate transport. This is an uncharacterized protein from Escherichia coli (strain K12).